Consider the following 432-residue polypeptide: Probable N-acetylmuramoyl-L-alanine amidase AmiB (432 aa).

An N-terminal signal peptide occupies residues 1–20 (MKTKILFFLFFSTFSFSIFA). Residues 25-244 (IAIDPGHGGK…IAYMIYEGLV (220 aa)) enclose the MurNAc-LAA domain. LysM domains lie at 292–335 (IRHI…SIKI) and 385–429 (LYHK…KIKL).

Belongs to the N-acetylmuramoyl-L-alanine amidase 3 family.

Its subcellular location is the periplasm. The enzyme catalyses Hydrolyzes the link between N-acetylmuramoyl residues and L-amino acid residues in certain cell-wall glycopeptides.. In terms of biological role, cell-wall hydrolase involved in septum cleavage during cell division. The sequence is that of Probable N-acetylmuramoyl-L-alanine amidase AmiB (amiB) from Haemophilus influenzae (strain ATCC 51907 / DSM 11121 / KW20 / Rd).